Consider the following 402-residue polypeptide: Chorismate synthase (402 aa).

NADP(+) is bound by residues Arg-40 and Arg-46. FMN contacts are provided by residues 134–136, 255–256, Gly-299, 314–318, and Arg-340; these read RAS, QA, and KPIAT.

The protein belongs to the chorismate synthase family. In terms of assembly, homotetramer. Requires FMNH2 as cofactor.

The catalysed reaction is 5-O-(1-carboxyvinyl)-3-phosphoshikimate = chorismate + phosphate. It participates in metabolic intermediate biosynthesis; chorismate biosynthesis; chorismate from D-erythrose 4-phosphate and phosphoenolpyruvate: step 7/7. Catalyzes the anti-1,4-elimination of the C-3 phosphate and the C-6 proR hydrogen from 5-enolpyruvylshikimate-3-phosphate (EPSP) to yield chorismate, which is the branch point compound that serves as the starting substrate for the three terminal pathways of aromatic amino acid biosynthesis. This reaction introduces a second double bond into the aromatic ring system. The protein is Chorismate synthase of Leifsonia xyli subsp. xyli (strain CTCB07).